Reading from the N-terminus, the 237-residue chain is Phosphoribosylaminoimidazole-succinocarboxamide synthase (237 aa).

It belongs to the SAICAR synthetase family.

It carries out the reaction 5-amino-1-(5-phospho-D-ribosyl)imidazole-4-carboxylate + L-aspartate + ATP = (2S)-2-[5-amino-1-(5-phospho-beta-D-ribosyl)imidazole-4-carboxamido]succinate + ADP + phosphate + 2 H(+). Its pathway is purine metabolism; IMP biosynthesis via de novo pathway; 5-amino-1-(5-phospho-D-ribosyl)imidazole-4-carboxamide from 5-amino-1-(5-phospho-D-ribosyl)imidazole-4-carboxylate: step 1/2. The sequence is that of Phosphoribosylaminoimidazole-succinocarboxamide synthase from Klebsiella pneumoniae (strain 342).